The chain runs to 364 residues: Lipoyl synthase, mitochondrial (364 aa).

Positions 99, 104, 110, 130, 134, 137, and 345 each coordinate [4Fe-4S] cluster. The region spanning 116–334 (HSTQTATIML…EQRGNELGFL (219 aa)) is the Radical SAM core domain.

This sequence belongs to the radical SAM superfamily. Lipoyl synthase family. It depends on [4Fe-4S] cluster as a cofactor.

Its subcellular location is the mitochondrion. The catalysed reaction is [[Fe-S] cluster scaffold protein carrying a second [4Fe-4S](2+) cluster] + N(6)-octanoyl-L-lysyl-[protein] + 2 oxidized [2Fe-2S]-[ferredoxin] + 2 S-adenosyl-L-methionine + 4 H(+) = [[Fe-S] cluster scaffold protein] + N(6)-[(R)-dihydrolipoyl]-L-lysyl-[protein] + 4 Fe(3+) + 2 hydrogen sulfide + 2 5'-deoxyadenosine + 2 L-methionine + 2 reduced [2Fe-2S]-[ferredoxin]. The protein operates within protein modification; protein lipoylation via endogenous pathway; protein N(6)-(lipoyl)lysine from octanoyl-[acyl-carrier-protein]: step 2/2. Functionally, catalyzes the radical-mediated insertion of two sulfur atoms into the C-6 and C-8 positions of the octanoyl moiety bound to the lipoyl domains of lipoate-dependent enzymes, thereby converting the octanoylated domains into lipoylated derivatives. The sequence is that of Lipoyl synthase, mitochondrial from Drosophila mojavensis (Fruit fly).